The following is a 599-amino-acid chain: Beta-myrcene synthase, chloroplastic (599 aa).

A chloroplast-targeting transit peptide spans 1–34; that stretch reads MWSTISISMNVAILKKPLNFLHNSNNKASNPRCV. 5 residues coordinate Mg(2+): Asp-352, Asp-356, Asp-496, Thr-500, and Glu-504. The short motif at 352-356 is the DDXXD motif element; it reads DDVYD.

It belongs to the terpene synthase family. It depends on Mg(2+) as a cofactor. Mn(2+) serves as cofactor.

The protein localises to the plastid. It is found in the chloroplast. The enzyme catalyses (2E)-geranyl diphosphate = beta-myrcene + diphosphate. Its pathway is secondary metabolite biosynthesis; terpenoid biosynthesis. Its function is as follows. Monoterpene synthase that catalyzes the formation of beta-myrcene from geranyl diphosphate. The chain is Beta-myrcene synthase, chloroplastic (MYS) from Ocimum basilicum (Sweet basil).